Consider the following 256-residue polypeptide: MPASRSLGMSSDARVNNESGFILHTYPFKETSVVAEVFTRAHGRVALIARGARRPASALRGLMQPFSPLLLSWFGKADLKTLHAAEWQGGLVAPQGRALMCGFYLNELLLRLLARGDAHERLYDRYVETLDQLARSAAASDAERATAFERILRRFEKNLLSEIGYGATFDVEAGGAAIEPGAAYVFQPERGALRAAGQPGCPVSGQTLLDLAGDSFERLATLGEAKALMRALINHTLGTKPLYTRQLLRELTELNP.

The protein belongs to the RecO family.

Its function is as follows. Involved in DNA repair and RecF pathway recombination. In Thiobacillus denitrificans (strain ATCC 25259 / T1), this protein is DNA repair protein RecO.